The chain runs to 844 residues: Bifunctional abietadiene synthase, chloroplastic (844 aa).

The transit peptide at 1–46 directs the protein to the chloroplast; the sequence is QSIPHFSTTLNAGSSARKRRSLYLRWGKGSNKIIACVGEGATSVPY. Lys245 contacts substrate. Mg(2+) is bound by residues Asp378 and Asp380. Residues 378–381 carry the DXDD motif motif; that stretch reads DIDD. A substrate-binding site is contributed by Lys465. Residues Asp597, Asp601, Asn741, Thr745, and Glu749 each contribute to the Mg(2+) site. The DDXXD motif signature appears at 597 to 601; sequence DDLYD.

The protein belongs to the terpene synthase family. Tpsd subfamily. As to quaternary structure, monomer. The cofactor is Mg(2+).

It is found in the plastid. The protein resides in the chloroplast. The enzyme catalyses (2E,6E,10E)-geranylgeranyl diphosphate = (+)-copalyl diphosphate. The catalysed reaction is (+)-copalyl diphosphate = abieta-7,13-diene + diphosphate. It carries out the reaction (+)-copalyl diphosphate = neoabietadiene + diphosphate. It catalyses the reaction (+)-copalyl diphosphate = abieta-8(14),12-diene + diphosphate. The protein operates within terpene metabolism; oleoresin biosynthesis. In terms of biological role, involved in defensive oleoresin formation in conifers in response to insect attack or other injury. Involved in diterpene (C20) olefins biosynthesis. Bifunctional enzyme that catalyzes two sequential cyclizations of geranylgeranyl diphosphate (GGPP) to abietadiene. The copalyl diphosphate (CPP) intermediate diffuses freely between the 2 active sites in the enzyme. The protein is Bifunctional abietadiene synthase, chloroplastic (LAS) of Abies balsamea (Balsam fir).